The chain runs to 90 residues: Nodulation protein NolS (90 aa).

Its function is as follows. Involved in nodulation of a particular host, M.lupulina. The chain is Nodulation protein NolS (nolS) from Sinorhizobium meliloti (strain Sm2011 / Rm2011 / 2011).